Here is a 376-residue protein sequence, read N- to C-terminus: MKILVDENMPYVEPLFGDLGDIIPVNGRTLTAEQVREADVLLVRSVTKVNAELLSGNNKLKFVGSATIGTDHVDLAYLAERNIPFSNAPGCNATAVGEFAFIAMLELAQRFNSPLKGKVVGIVGAGNTGTATAKCLQAYGIKVLLNDPIKAAEGDPRSFVSLDTIMAQADIISLHVPITHTGEHKTKHLFDEARLKALKPNTWLVNCCRGDVIDNQALIKVKQQRDDLKLVLDVWEGEPTPLPELVPLAEFATPHIAGYSLEGKARGTFMLYQNLCQLLNITADKSLLDLLPTFNIKAVELATAPNEKALLQLARFVYDLRDDDKMFRNTFLNENGFDTMRKNHQHRREFSALALAYDGQSEVDWLSNLGFSGVGQ.

Positions 45 and 67 each coordinate substrate. Asp-147 contacts NAD(+). Residue Arg-209 is part of the active site. Asp-233 contacts NAD(+). Glu-238 is an active-site residue. Catalysis depends on His-255, which acts as the Proton donor. Gly-258 provides a ligand contact to NAD(+). Tyr-259 serves as a coordination point for substrate.

Belongs to the D-isomer specific 2-hydroxyacid dehydrogenase family. PdxB subfamily. As to quaternary structure, homodimer.

It is found in the cytoplasm. It catalyses the reaction 4-phospho-D-erythronate + NAD(+) = (R)-3-hydroxy-2-oxo-4-phosphooxybutanoate + NADH + H(+). Its pathway is cofactor biosynthesis; pyridoxine 5'-phosphate biosynthesis; pyridoxine 5'-phosphate from D-erythrose 4-phosphate: step 2/5. Catalyzes the oxidation of erythronate-4-phosphate to 3-hydroxy-2-oxo-4-phosphonooxybutanoate. This Shewanella baltica (strain OS223) protein is Erythronate-4-phosphate dehydrogenase.